A 279-amino-acid polypeptide reads, in one-letter code: MQKIVQTDEITNTQAFRKGKRKRTETMDSENANSDMDKGQRDPYSGNAFLPGESSSEDEEPLAELSKEELCAKIKSLKEKLTNTRKENSRLRQSLVMLQVLPQAVTQFEELVGMAEALLKGGGTMSTSASTLWRATNNSSPDSFASTCSNSNSNSSSPVSLKPEEEHQTDEKQFQIEKWQIARCNKSKPQKFINDLMQVLYTNEYMATHSLTGAKSSTSRDKAVKPAMNQNEVQEIIGVTKQLFPNTDDVSIRRMIGQKLNNCTKKPNLSKNLNSQDIK.

The segment covering 1–15 (MQKIVQTDEITNTQA) has biased composition (polar residues). 2 disordered regions span residues 1-65 (MQKI…LAEL) and 134-172 (RATN…TDEK). Positions 62 to 99 (LAELSKEELCAKIKSLKEKLTNTRKENSRLRQSLVMLQ) form a coiled coil. The span at 134 to 148 (RATNNSSPDSFASTC) shows a compositional bias: polar residues. Basic and acidic residues predominate over residues 162–172 (KPEEEHQTDEK). A BEN domain is found at 171–271 (EKQFQIEKWQ…NCTKKPNLSK (101 aa)).

In terms of assembly, interacts (via BEN domain) with RBPJ.

It is found in the nucleus. In terms of biological role, acts as a corepressor of recombining binding protein suppressor hairless (RBPJ) and inhibits Notch signaling in neural stem cells, thereby opposing their self-renewal and promoting neurogenesis. The protein is BEN domain-containing protein 6 (BEND6) of Homo sapiens (Human).